Reading from the N-terminus, the 712-residue chain is Ribosomal RNA large subunit methyltransferase K/L (712 aa).

The THUMP domain maps to 42 to 153 (QALRIVMWSR…KGRASLSIDL (112 aa)).

It belongs to the methyltransferase superfamily. RlmKL family.

The protein localises to the cytoplasm. The catalysed reaction is guanosine(2445) in 23S rRNA + S-adenosyl-L-methionine = N(2)-methylguanosine(2445) in 23S rRNA + S-adenosyl-L-homocysteine + H(+). It carries out the reaction guanosine(2069) in 23S rRNA + S-adenosyl-L-methionine = N(2)-methylguanosine(2069) in 23S rRNA + S-adenosyl-L-homocysteine + H(+). Functionally, specifically methylates the guanine in position 2445 (m2G2445) and the guanine in position 2069 (m7G2069) of 23S rRNA. In Stenotrophomonas maltophilia (strain K279a), this protein is Ribosomal RNA large subunit methyltransferase K/L.